The sequence spans 267 residues: Flap endonuclease Xni (267 aa).

Aspartate 115 provides a ligand contact to Mg(2+). Residues valine 171–tyrosine 261 form the 5'-3' exonuclease domain. 3 residues coordinate K(+): leucine 182, valine 193, and isoleucine 196. An interaction with DNA region spans residues glycine 195–threonine 200.

The protein belongs to the Xni family. It depends on Mg(2+) as a cofactor. Requires K(+) as cofactor.

Functionally, has flap endonuclease activity. During DNA replication, flap endonucleases cleave the 5'-overhanging flap structure that is generated by displacement synthesis when DNA polymerase encounters the 5'-end of a downstream Okazaki fragment. The chain is Flap endonuclease Xni from Aeromonas hydrophila subsp. hydrophila (strain ATCC 7966 / DSM 30187 / BCRC 13018 / CCUG 14551 / JCM 1027 / KCTC 2358 / NCIMB 9240 / NCTC 8049).